A 214-amino-acid polypeptide reads, in one-letter code: Pyridoxine/pyridoxamine 5'-phosphate oxidase (214 aa).

Residues 8-11 and Lys66 each bind substrate; that span reads RINY. FMN is bound by residues 61–66, 76–77, Arg82, Lys83, and Gln105; these read RIVLVK and FT. Tyr123, Arg127, and Ser131 together coordinate substrate. Residues 140 to 141 and Trp184 each bind FMN; that span reads QS. A substrate-binding site is contributed by 190–192; sequence RLH. An FMN-binding site is contributed by Arg194.

Belongs to the pyridoxamine 5'-phosphate oxidase family. In terms of assembly, homodimer. Requires FMN as cofactor.

It carries out the reaction pyridoxamine 5'-phosphate + O2 + H2O = pyridoxal 5'-phosphate + H2O2 + NH4(+). The catalysed reaction is pyridoxine 5'-phosphate + O2 = pyridoxal 5'-phosphate + H2O2. Its pathway is cofactor metabolism; pyridoxal 5'-phosphate salvage; pyridoxal 5'-phosphate from pyridoxamine 5'-phosphate: step 1/1. It participates in cofactor metabolism; pyridoxal 5'-phosphate salvage; pyridoxal 5'-phosphate from pyridoxine 5'-phosphate: step 1/1. In terms of biological role, catalyzes the oxidation of either pyridoxine 5'-phosphate (PNP) or pyridoxamine 5'-phosphate (PMP) into pyridoxal 5'-phosphate (PLP). The sequence is that of Pyridoxine/pyridoxamine 5'-phosphate oxidase from Burkholderia multivorans (strain ATCC 17616 / 249).